The following is a 448-amino-acid chain: Ribosomal protein uS12 methylthiotransferase RimO (448 aa).

The 116-residue stretch at 13-128 (KSFFITTLGC…AGEILRKNFP (116 aa)) folds into the MTTase N-terminal domain. 6 residues coordinate [4Fe-4S] cluster: Cys-22, Cys-58, Cys-91, Cys-167, Cys-171, and Cys-174. The 230-residue stretch at 153–382 (NYSKPYSYVK…AYLGTLKTIH (230 aa)) folds into the Radical SAM core domain. Residues 383 to 448 (QNRIGKIYPC…ELDMSGTWVD (66 aa)) form the TRAM domain.

Belongs to the methylthiotransferase family. RimO subfamily. It depends on [4Fe-4S] cluster as a cofactor.

Its subcellular location is the cytoplasm. The catalysed reaction is L-aspartate(89)-[ribosomal protein uS12]-hydrogen + (sulfur carrier)-SH + AH2 + 2 S-adenosyl-L-methionine = 3-methylsulfanyl-L-aspartate(89)-[ribosomal protein uS12]-hydrogen + (sulfur carrier)-H + 5'-deoxyadenosine + L-methionine + A + S-adenosyl-L-homocysteine + 2 H(+). Its function is as follows. Catalyzes the methylthiolation of an aspartic acid residue of ribosomal protein uS12. This is Ribosomal protein uS12 methylthiotransferase RimO from Leptospira biflexa serovar Patoc (strain Patoc 1 / Ames).